A 446-amino-acid chain; its full sequence is tRNA modification GTPase MnmE (446 aa).

(6S)-5-formyl-5,6,7,8-tetrahydrofolate contacts are provided by R22, E80, and K119. Residues 215–370 (GLSLVIAGRP…LKKVIKQVVG (156 aa)) form the TrmE-type G domain. N225 contributes to the K(+) binding site. Residues 225–230 (NAGKST), 244–250 (TEIAGTT), and 269–272 (DTAG) contribute to the GTP site. Position 229 (S229) interacts with Mg(2+). Positions 244, 246, and 249 each coordinate K(+). Residue T250 participates in Mg(2+) binding. K446 contacts (6S)-5-formyl-5,6,7,8-tetrahydrofolate.

Belongs to the TRAFAC class TrmE-Era-EngA-EngB-Septin-like GTPase superfamily. TrmE GTPase family. Homodimer. Heterotetramer of two MnmE and two MnmG subunits. The cofactor is K(+).

It is found in the cytoplasm. Its function is as follows. Exhibits a very high intrinsic GTPase hydrolysis rate. Involved in the addition of a carboxymethylaminomethyl (cmnm) group at the wobble position (U34) of certain tRNAs, forming tRNA-cmnm(5)s(2)U34. The chain is tRNA modification GTPase MnmE from Legionella pneumophila (strain Corby).